A 406-amino-acid polypeptide reads, in one-letter code: Purine nucleoside permease (406 aa).

The signal sequence occupies residues 1-22; sequence MKLSTLFTLATTISTLTTFTIA.

This sequence belongs to the NUP family. Predicted to be a substrate for cleavage by KEX2.

With respect to regulation, mammalian nucleoside transport inhibitors dipyridamole and NBMPR inhibit adenosine transport by NUP. In terms of biological role, nucleoside permease that transports adenosine and guanosine. Does not show any transport activities towards cytidine, adenine, guanine, uridine, and uracil. The chain is Purine nucleoside permease from Candida albicans (strain SC5314 / ATCC MYA-2876) (Yeast).